The primary structure comprises 510 residues: MNLEKFVDELPIPEVAEPVKKNPRQTYYEIAMEEVFLKVHRDLPPTKLWTYNGSLPGPTIKANRNEKVKVKWMNKLPLKHFLPVDHTIHAGHHDEPEVKTVVHLHGGVTPASSDGYPEAWFSRDFEATGPFFEREVYEYPNHQQACTLWYHDHAMALTRLNVYAGLAGFYLISDAFEKSLELPKDEYDIPLMIMDRTFQEDGALFYPSRPNNTPEDSDLPDPSIVPFFCGETILVNGKVWPYLEVEPRKYRFRILNASNTRTYELHLDNDATILQIGSDGGFLPRPVHHQSFSIAPAERFDVIIDFSAYENKTIVLKNSAGCGQDVNPETDANIMQFKVTRPLKGRAAKTLRPIFKPLPPLRPSRADNERTLTLTGTQDKYGRPILLLDNQFWNDPVTENPRLGSVEVWNIVNPTRGTHPIHLHLVQFRVIDRRPFDTDIYQSTGEIVYTGPNEAPPLHEQGYKDTIQAHAGEVIRIIARFVPYSGRYVWHCHILEHEDYDMMRPMDIIQ.

4 consecutive Plastocyanin-like domains span residues 45 to 79 (PTKL…LPLK), 99 to 174 (KTVV…LISD), 242 to 317 (YLEV…IVLK), and 372 to 506 (LTLT…MRPM). Residues histidine 103, histidine 105, histidine 151, and histidine 153 each coordinate Cu cation. The Cu cation site is built by histidine 419, histidine 422, histidine 424, histidine 491, cysteine 492, histidine 493, histidine 497, and methionine 502.

Belongs to the multicopper oxidase family. Requires Cu(2+) as cofactor.

It catalyses the reaction 4 hydroquinone + O2 = 4 benzosemiquinone + 2 H2O. Resistant to alkali and organic solvents such as methanol, ethanol and acetone. Resistant to EDTA, which might be explained by the spatial protection of copper ions in the active sites. Inhibited by DMSO. Strongly inhibited by Fe(2+) and DTT. Functionally, multicopper oxidase that catalyzes the oxidation of a variety of substrates, including phenolic and non-phenolic compounds. Substrates include 2,6-dimethoxyphenol (2,6-DMP) and the non-phenolic compound 2,2'-azino-bis(3-ethylbenzothiazoline-6-sulfonic acid) (ABTS). Cannot use guaiacol and catechol. This chain is Laccase, found in Bacillus stratosphericus.